The following is a 250-amino-acid chain: ATP synthase subunit a (250 aa).

A run of 6 helical transmembrane segments spans residues 29–49 (ASLFMVASAVLSAGFLYFATS), 84–104 (FFPLVFSLFMFVLTANLLGMV), 114–134 (IIVTFALALLVILTVILYGFI), 143–163 (LFVPQGVPGILLPLVVIIEII), 185–205 (ITLKVFAGFVASLGTLGALGI), and 208–228 (AILPLIMTVALTGLEFLVAFL).

Belongs to the ATPase A chain family. As to quaternary structure, F-type ATPases have 2 components, CF(1) - the catalytic core - and CF(0) - the membrane proton channel. CF(1) has five subunits: alpha(3), beta(3), gamma(1), delta(1), epsilon(1). CF(0) has three main subunits: a(1), b(2) and c(9-12). The alpha and beta chains form an alternating ring which encloses part of the gamma chain. CF(1) is attached to CF(0) by a central stalk formed by the gamma and epsilon chains, while a peripheral stalk is formed by the delta and b chains.

It is found in the cell inner membrane. In terms of biological role, key component of the proton channel; it plays a direct role in the translocation of protons across the membrane. In Rhizobium rhizogenes (strain K84 / ATCC BAA-868) (Agrobacterium radiobacter), this protein is ATP synthase subunit a.